A 430-amino-acid polypeptide reads, in one-letter code: Adenylosuccinate synthetase (430 aa).

Residues 12–18 (GDEGKGK) and 40–42 (GHT) each bind GTP. D13 functions as the Proton acceptor in the catalytic mechanism. Residues D13 and G40 each coordinate Mg(2+). Residues 13–16 (DEGK), 38–41 (NAGH), T128, R142, Q223, T238, and R302 contribute to the IMP site. H41 serves as the catalytic Proton donor. 298-304 (TTTGRPR) provides a ligand contact to substrate. Residues R304, 330 to 332 (SID), and 412 to 414 (SVG) contribute to the GTP site.

It belongs to the adenylosuccinate synthetase family. Homodimer. Mg(2+) is required as a cofactor.

The protein resides in the cytoplasm. The catalysed reaction is IMP + L-aspartate + GTP = N(6)-(1,2-dicarboxyethyl)-AMP + GDP + phosphate + 2 H(+). The protein operates within purine metabolism; AMP biosynthesis via de novo pathway; AMP from IMP: step 1/2. Its function is as follows. Plays an important role in the de novo pathway of purine nucleotide biosynthesis. Catalyzes the first committed step in the biosynthesis of AMP from IMP. The protein is Adenylosuccinate synthetase of Streptococcus pyogenes serotype M1.